The following is a 156-amino-acid chain: Cell division protein SepF (156 aa).

Basic and acidic residues predominate over residues 23-36 (SYEKEQTDMKKQQD). Residues 23–50 (SYEKEQTDMKKQQDPPEQQDVTFPKAQP) form a disordered region.

This sequence belongs to the SepF family. Homodimer. Interacts with FtsZ.

It localises to the cytoplasm. Functionally, cell division protein that is part of the divisome complex and is recruited early to the Z-ring. Probably stimulates Z-ring formation, perhaps through the cross-linking of FtsZ protofilaments. Its function overlaps with FtsA. The chain is Cell division protein SepF from Bacillus thuringiensis (strain Al Hakam).